The primary structure comprises 93 residues: Small ribosomal subunit protein uS19 (93 aa).

It belongs to the universal ribosomal protein uS19 family.

In terms of biological role, protein S19 forms a complex with S13 that binds strongly to the 16S ribosomal RNA. This Renibacterium salmoninarum (strain ATCC 33209 / DSM 20767 / JCM 11484 / NBRC 15589 / NCIMB 2235) protein is Small ribosomal subunit protein uS19.